A 215-amino-acid polypeptide reads, in one-letter code: Probable phosphoglycerate mutase GpmB (215 aa).

Substrate-binding positions include 8 to 15 (RHGETQWN), 21 to 22 (QG), Arg-58, Lys-60, 82 to 85 (ELDM), 104 to 105 (RR), and 151 to 152 (GI). The active-site Tele-phosphohistidine intermediate is the His-9. Glu-82 serves as the catalytic Proton donor/acceptor.

This sequence belongs to the phosphoglycerate mutase family. GpmB subfamily.

The catalysed reaction is (2R)-2-phosphoglycerate = (2R)-3-phosphoglycerate. Its pathway is carbohydrate degradation; glycolysis; pyruvate from D-glyceraldehyde 3-phosphate: step 3/5. In Salmonella paratyphi A (strain AKU_12601), this protein is Probable phosphoglycerate mutase GpmB.